Reading from the N-terminus, the 130-residue chain is Glycine cleavage system H protein (130 aa).

The 82-residue stretch at 22–103 (KAYIGISDCA…PYGSWIAAIE (82 aa)) folds into the Lipoyl-binding domain. Position 63 is an N6-lipoyllysine (Lys-63).

Belongs to the GcvH family. In terms of assembly, the glycine cleavage system is composed of four proteins: P, T, L and H. (R)-lipoate serves as cofactor.

Its function is as follows. The glycine cleavage system catalyzes the degradation of glycine. The H protein shuttles the methylamine group of glycine from the P protein to the T protein. The chain is Glycine cleavage system H protein from Clostridium botulinum (strain Okra / Type B1).